The sequence spans 617 residues: uncharacterized protein (617 aa).

In terms of domain architecture, B12-binding N-terminal spans 33-134; the sequence is TEDDFRGEKF…FXNATKQKGS (102 aa). Residues Glu-84, 146-150, His-149, Ser-194, Thr-198, and Ala-251 contribute to the methylcob(III)alamin site; that span reads GDVHD. Positions 136–272 constitute a B12-binding domain; sequence NGKVVIATVK…NPEGRAALWE (137 aa). The AdoMet activation domain maps to 288–617; it reads SKPLRKQLSI…MMKWLGVAMK (330 aa). S-adenosyl-L-methionine-binding positions include Asp-337, Arg-528, and 583-584; that span reads YF.

It belongs to the vitamin-B12 dependent methionine synthase family.

This is an uncharacterized protein from Haemophilus influenzae (strain ATCC 51907 / DSM 11121 / KW20 / Rd).